The primary structure comprises 263 residues: Aquaporin Lacbi1:247946 (263 aa).

At 1 to 18 (MKLTISHHKCAIRKVMAE) the chain is on the cytoplasmic side. Residues 19-39 (FVGVALLVIFGAGTACQVVLS) traverse the membrane as a helical segment. The Extracellular portion of the chain corresponds to 40 to 45 (TNPSSF). The helical transmembrane segment at 46–66 (LSINFGWAIGIATGAWVSAGI) threads the bilayer. Residues 67–89 (SGGHINPAITIAMATYRGFPWRE) lie on the Cytoplasmic side of the membrane. Residues 72–74 (NPA) carry the NPA 1 motif. Residues 90-110 (VPGYIFAQALGGFVGAALVYA) form a helical membrane-spanning segment. Topologically, residues 111–143 (NYFHAIDIFEGGHIRTQATASLFATFALPYMTQ) are extracellular. Residues 144-164 (ASCFFSEFLATAVLFIVFLAL) form a helical membrane-spanning segment. Residues 165-169 (NDKHN) are Cytoplasmic-facing. The chain crosses the membrane as a helical span at residues 170 to 190 (GALTNGLLPFALFILFIGLGA). Residues 191-227 (SLGMQTGYAVNPARDFGPRLFLAMAGYGKAVFNYRRQ) are Extracellular-facing. The NPA 2 signature appears at 201–203 (NPA). Residues 228-248 (YWIWAPIIAPILGAQAGGLLY) traverse the membrane as a helical segment. Residues 249–263 (DTSIYNGDDSPIKWR) lie on the Cytoplasmic side of the membrane.

This sequence belongs to the MIP/aquaporin (TC 1.A.8) family.

Its subcellular location is the membrane. It carries out the reaction H2O(in) = H2O(out). Its function is as follows. Water channel required to facilitate the transport of water across membranes. Shows low but significant water conductivity, but no glycerol nor ammonium transport activities. This chain is Aquaporin Lacbi1:247946, found in Laccaria bicolor (strain S238N-H82 / ATCC MYA-4686) (Bicoloured deceiver).